The following is a 333-amino-acid chain: Transcription termination factor MTERF6, chloroplastic/mitochondrial (333 aa).

It belongs to the mTERF family.

It is found in the plastid. Its subcellular location is the chloroplast. The protein localises to the mitochondrion. Its function is as follows. Transcription termination factor essential for chloroplast development. Required for maturation of 16S rRNA, 18S rRNA and 23S rRNA in the chloroplast. Binds to a specific region within the tRNA(Ile)(GAU) gene at a position adjacent to and downstream of the 16S rRNA gene. Required for the maturation of tRNA(Ile)(GAU). Binds to double-stranded DNA. The protein is Transcription termination factor MTERF6, chloroplastic/mitochondrial of Arabidopsis thaliana (Mouse-ear cress).